The chain runs to 184 residues: Large ribosomal subunit protein uL5 (184 aa).

This sequence belongs to the universal ribosomal protein uL5 family. As to quaternary structure, part of the 50S ribosomal subunit; part of the 5S rRNA/L5/L18/L25 subcomplex. Contacts the 5S rRNA and the P site tRNA. Forms a bridge to the 30S subunit in the 70S ribosome.

This is one of the proteins that bind and probably mediate the attachment of the 5S RNA into the large ribosomal subunit, where it forms part of the central protuberance. In the 70S ribosome it contacts protein S13 of the 30S subunit (bridge B1b), connecting the 2 subunits; this bridge is implicated in subunit movement. Contacts the P site tRNA; the 5S rRNA and some of its associated proteins might help stabilize positioning of ribosome-bound tRNAs. This Syntrophotalea carbinolica (strain DSM 2380 / NBRC 103641 / GraBd1) (Pelobacter carbinolicus) protein is Large ribosomal subunit protein uL5.